Reading from the N-terminus, the 330-residue chain is Biotin synthase (330 aa).

The Radical SAM core domain maps to 53-276 (NNIRLNVLLS…VFPFKELRLS (224 aa)). [4Fe-4S] cluster-binding residues include C68, C72, and C75. Residues C112, C144, C204, and R274 each contribute to the [2Fe-2S] cluster site.

Belongs to the radical SAM superfamily. Biotin synthase family. In terms of assembly, homodimer. [4Fe-4S] cluster serves as cofactor. [2Fe-2S] cluster is required as a cofactor.

It catalyses the reaction (4R,5S)-dethiobiotin + (sulfur carrier)-SH + 2 reduced [2Fe-2S]-[ferredoxin] + 2 S-adenosyl-L-methionine = (sulfur carrier)-H + biotin + 2 5'-deoxyadenosine + 2 L-methionine + 2 oxidized [2Fe-2S]-[ferredoxin]. The protein operates within cofactor biosynthesis; biotin biosynthesis; biotin from 7,8-diaminononanoate: step 2/2. Functionally, catalyzes the conversion of dethiobiotin (DTB) to biotin by the insertion of a sulfur atom into dethiobiotin via a radical-based mechanism. In Streptococcus agalactiae serotype V (strain ATCC BAA-611 / 2603 V/R), this protein is Biotin synthase.